The following is a 638-amino-acid chain: MAENGESSGPPRPSRGPAAAPGAASPPAEPKIIKVTVKTPKEKEEFAVPENSTVQQFKEAISKRFKSQTDQLVLIFAGKILKDQDTLMQHGIHDGLTVHLVIKSQNRPQGQATTQPSTTAGTSTTTTTTTTAAAPAATTSSAPRSSSTPTTTNSSSFGLGSLSSLSNLGLNSPNFTELQNQMQQQLLASPEMMIQIMENPFVQSMLSNPDLMRQLIMANPQMQQLIQRNPEISHLLNNPDIMRQTLEIARNPAMMQEMMRNQDLALSNLESIPGGYNALRRMYTDIQEPMLNAAQEQFGGNPFATVGSSSTSGEGTQPSRTENRDPLPNPWAPPPTTQTAATTTTTTTTSSGSGSGSSSSSTTAGNTMAAANYVASIFSTPGMQSLLQQITENPQLIQNMLSAPYMRSMMQSLSQNPDMAAQMMLSSPLFTSNPQLQEQMRPQLPNFLQQMQNPETIAAMSNPRAMQALMQIQQGLQTLATEAPGLIPSFAPGVGMGVLGTAITPVGPVTPIGPIGPIVPFTPIGPIGPIGPTGPASSPGSTGTGIPPATTVSSSAPTETISPTSESGPNQQFIQQMVQALTGGSPPQPPNPEVRFQQQLEQLNAMGFLNREANLQALIATGGDINAAIERLLGSQPS.

A compositionally biased stretch (low complexity) spans 1 to 26 (MAENGESSGPPRPSRGPAAAPGAASP). Disordered regions lie at residues 1–31 (MAEN…AEPK) and 107–158 (RPQG…SSFG). The residue at position 2 (A2) is an N-acetylalanine. Phosphoserine is present on S25. One can recognise a Ubiquitin-like domain in the interval 33–107 (IKVTVKTPKE…VHLVIKSQNR (75 aa)). The segment covering 112–158 (ATTQPSTTAGTSTTTTTTTTAAAPAATTSSAPRSSSTPTTTNSSSFG) has biased composition (low complexity). 2 consecutive STI1 domains span residues 189–217 (SPEM…QLIM) and 219–258 (NPQM…MQEM). Residues 298 to 364 (FGGNPFATVG…SGSSSSSTTA (67 aa)) form a disordered region. Positions 305 to 316 (TVGSSSTSGEGT) are enriched in low complexity. The segment covering 327–336 (LPNPWAPPPT) has biased composition (pro residues). Low complexity predominate over residues 337–364 (TQTAATTTTTTTTSSGSGSGSSSSSTTA). 2 consecutive STI1 domains span residues 393-440 (NPQL…QEQM) and 444-476 (LPNF…QQGL). Repeat copies occupy residues 505-507 (PVG), 508-510 (PVT), 511-513 (PIG), 514-516 (PIG), 517-519 (PIV), 520-522 (PFT), 523-525 (PIG), 526-528 (PIG), 529-531 (PIG), 532-533 (PT), and 535-537 (PAS). Residues 505–537 (PVGPVTPIGPIGPIVPFTPIGPIGPIGPTGPAS) are 11 X 3 AA tandem repeats P-X-X. The interval 528-570 (GPIGPTGPASSPGSTGTGIPPATTVSSSAPTETISPTSESGPN) is disordered. Low complexity predominate over residues 533 to 551 (TGPASSPGSTGTGIPPATT). Residues 552–570 (VSSSAPTETISPTSESGPN) show a composition bias toward polar residues. A UBA domain is found at 589–635 (PPNPEVRFQQQLEQLNAMGFLNREANLQALIATGGDINAAIERLLGS).

In terms of assembly, homodimer. Forms heterodimer with UBQLN1. Binds UBE3A and BTRC. Interacts with the 19S proteasome subunit. Interacts with C9orf72. Binds CD47. Interacts with HNRNPA1 and HNRNPU. Found in a complex with UBQLN1 and MAP1LC3A/B/C. Interacts with EPS15, EPN1 and EPN2. Interacts with HERPUD1. Interacts with RAD23A. Interacts with TARDBP. Interacts (via C-terminus) with FAF2 (via N-terminus). Interacts with UBQLN4. Post-translationally, degraded during macroautophagy. As to expression, highly expressed in smooth muscle. Expression in other tissues is very low.

The protein resides in the cytoplasm. It is found in the nucleus. The protein localises to the membrane. It localises to the cytoplasmic vesicle. Its subcellular location is the autophagosome. In terms of biological role, plays an important role in the regulation of different protein degradation mechanisms and pathways including ubiquitin-proteasome system (UPS), autophagy and the endoplasmic reticulum-associated protein degradation (ERAD) pathway. Mediates the proteasomal targeting of misfolded or accumulated proteins for degradation by binding (via UBA domain) to their polyubiquitin chains and by interacting (via ubiquitin-like domain) with the subunits of the proteasome. Plays a role in the ERAD pathway via its interaction with ER-localized proteins FAF2/UBXD8 and HERPUD1 and may form a link between the polyubiquitinated ERAD substrates and the proteasome. Involved in the regulation of macroautophagy and autophagosome formation; required for maturation of autophagy-related protein LC3 from the cytosolic form LC3-I to the membrane-bound form LC3-II and may assist in the maturation of autophagosomes to autolysosomes by mediating autophagosome-lysosome fusion. Negatively regulates the endocytosis of GPCR receptors: AVPR2 and ADRB2, by specifically reducing the rate at which receptor-arrestin complexes concentrate in clathrin-coated pits (CCPs). Links CD47 to vimentin-containing intermediate filaments of the cytoskeleton. This chain is Ubiquilin-2 (Ubqln2), found in Mus musculus (Mouse).